A 254-amino-acid polypeptide reads, in one-letter code: HTH-type transcriptional repressor DasR (254 aa).

In terms of domain architecture, HTH gntR-type spans 17 to 87; the sequence is RTARVPKYYR…QGKGTFVAKP (71 aa). Residues 47-66 constitute a DNA-binding region (H-T-H motif); it reads ERTLAAEFDTSRTTVRQALQ.

The protein resides in the cytoplasm. Binding to the target genes is abolished by GlcN6P, a central molecule in N-acetylglucosamine metabolism. In terms of biological role, global regulator that is part of the nutrient-sensing system. In the absence of glucosamine 6-P (GlcN6P), represses the phosphotransferase system (PTS) specific for the uptake of N-acetylglucosamine (PTSNag), and genes involved in the metabolism of chitin, as well as several genes involved in development, thereby linking carbon availability to morphogenesis. Also regulates the expression of the ABC transporters DasABC and NgcEFG, which are involved in N,N'-diacetylchitobiose ((GlcNAc)2) uptake. Binds to the DNA consensus sequence 5'-ACTGGTCTAGACCACT-3'. This is HTH-type transcriptional repressor DasR (dasR) from Streptomyces coelicolor (strain ATCC BAA-471 / A3(2) / M145).